The sequence spans 181 residues: Probable integrase/recombinase YoeC (181 aa).

The region spanning 3–176 (IVQPIRSLEK…DEDTTRAAYK (174 aa)) is the Tyr recombinase domain. Catalysis depends on residues R40, K64, H128, R131, and H154. Y163 (O-(3'-phospho-DNA)-tyrosine intermediate) is an active-site residue.

Belongs to the 'phage' integrase family.

The polypeptide is Probable integrase/recombinase YoeC (yoeC) (Bacillus subtilis (strain 168)).